We begin with the raw amino-acid sequence, 295 residues long: Pyridoxal 5'-phosphate synthase subunit PdxS (295 aa).

Asp-25 is a binding site for D-ribose 5-phosphate. The active-site Schiff-base intermediate with D-ribose 5-phosphate is Lys-82. Residue Gly-154 participates in D-ribose 5-phosphate binding. Arg-166 contacts D-glyceraldehyde 3-phosphate. Residues Gly-215 and 236 to 237 (GS) each bind D-ribose 5-phosphate.

It belongs to the PdxS/SNZ family. In terms of assembly, in the presence of PdxT, forms a dodecamer of heterodimers.

It carries out the reaction aldehydo-D-ribose 5-phosphate + D-glyceraldehyde 3-phosphate + L-glutamine = pyridoxal 5'-phosphate + L-glutamate + phosphate + 3 H2O + H(+). It participates in cofactor biosynthesis; pyridoxal 5'-phosphate biosynthesis. Functionally, catalyzes the formation of pyridoxal 5'-phosphate from ribose 5-phosphate (RBP), glyceraldehyde 3-phosphate (G3P) and ammonia. The ammonia is provided by the PdxT subunit. Can also use ribulose 5-phosphate and dihydroxyacetone phosphate as substrates, resulting from enzyme-catalyzed isomerization of RBP and G3P, respectively. In Bacillus cereus (strain G9842), this protein is Pyridoxal 5'-phosphate synthase subunit PdxS.